Here is a 231-residue protein sequence, read N- to C-terminus: Putative aminodeoxychorismate lyase (231 aa).

It belongs to the class-IV pyridoxal-phosphate-dependent aminotransferase family. It depends on pyridoxal 5'-phosphate as a cofactor.

The protein resides in the cytoplasm. It is found in the nucleus. The enzyme catalyses 4-amino-4-deoxychorismate = 4-aminobenzoate + pyruvate + H(+). It functions in the pathway cofactor biosynthesis; tetrahydrofolate biosynthesis; 4-aminobenzoate from chorismate: step 2/2. Its function is as follows. Converts 4-amino-4-deoxychorismate into 4-aminobenzoate (PABA) and pyruvate. The sequence is that of Putative aminodeoxychorismate lyase from Schizosaccharomyces pombe (strain 972 / ATCC 24843) (Fission yeast).